The chain runs to 388 residues: Glucose-1-phosphate adenylyltransferase (388 aa).

Alpha-D-glucose 1-phosphate-binding positions include tyrosine 100, glycine 165, 180–181, and serine 191; that span reads EK.

The protein belongs to the bacterial/plant glucose-1-phosphate adenylyltransferase family. Homotetramer.

The catalysed reaction is alpha-D-glucose 1-phosphate + ATP + H(+) = ADP-alpha-D-glucose + diphosphate. The protein operates within glycan biosynthesis; glycogen biosynthesis. Functionally, involved in the biosynthesis of ADP-glucose, a building block required for the elongation reactions to produce glycogen. Catalyzes the reaction between ATP and alpha-D-glucose 1-phosphate (G1P) to produce pyrophosphate and ADP-Glc. This chain is Glucose-1-phosphate adenylyltransferase, found in Clostridium perfringens (strain SM101 / Type A).